Consider the following 280-residue polypeptide: Digeranylgeranylglyceryl phosphate synthase (280 aa).

9 helical membrane passes run 4–24 (AAYL…AGIL), 27–47 (IIAT…VLTI), 83–103 (LMYA…FTPL), 104–124 (PLAG…SFLK), 128–148 (LIGN…GGAI), 150–170 (GTQG…VMLA), 199–219 (ATIY…LLLY), 222–242 (WGAF…FGAI), and 260–280 (KILK…AVLL).

This sequence belongs to the UbiA prenyltransferase family. DGGGP synthase subfamily. The cofactor is Mg(2+).

The protein localises to the cell membrane. It catalyses the reaction sn-3-O-(geranylgeranyl)glycerol 1-phosphate + (2E,6E,10E)-geranylgeranyl diphosphate = 2,3-bis-O-(geranylgeranyl)-sn-glycerol 1-phosphate + diphosphate. It functions in the pathway membrane lipid metabolism; glycerophospholipid metabolism. Its function is as follows. Prenyltransferase that catalyzes the transfer of the geranylgeranyl moiety of geranylgeranyl diphosphate (GGPP) to the C2 hydroxyl of (S)-3-O-geranylgeranylglyceryl phosphate (GGGP). This reaction is the second ether-bond-formation step in the biosynthesis of archaeal membrane lipids. The chain is Digeranylgeranylglyceryl phosphate synthase from Methanospirillum hungatei JF-1 (strain ATCC 27890 / DSM 864 / NBRC 100397 / JF-1).